The sequence spans 472 residues: Chromosomal replication initiator protein DnaA (472 aa).

The segment at 1–73 (MSNMEQDRWS…LSCWQAELPE (73 aa)) is domain I, interacts with DnaA modulators. The interval 73 to 128 (EVNRVDLTVRSPVRCAAPAKEAPAPVESRRDEQRPSAERSNGATPVSANHDALGGS) is domain II. The tract at residues 89–124 (APAKEAPAPVESRRDEQRPSAERSNGATPVSANHDA) is disordered. Positions 99 to 109 (ESRRDEQRPSA) are enriched in basic and acidic residues. Residues 110 to 119 (ERSNGATPVS) show a composition bias toward polar residues. The segment at 129 to 351 (PLDPRLTFAS…GAINRLLAHS (223 aa)) is domain III, AAA+ region. ATP is bound by residues glycine 176, glycine 178, lysine 179, and threonine 180. The domain IV, binds dsDNA stretch occupies residues 352–472 (KLNNQPVTLE…VESLKRQLQE (121 aa)).

The protein belongs to the DnaA family. Oligomerizes as a right-handed, spiral filament on DNA at oriC.

It localises to the cytoplasm. Functionally, plays an essential role in the initiation and regulation of chromosomal replication. ATP-DnaA binds to the origin of replication (oriC) to initiate formation of the DNA replication initiation complex once per cell cycle. Binds the DnaA box (a 9 base pair repeat at the origin) and separates the double-stranded (ds)DNA. Forms a right-handed helical filament on oriC DNA; dsDNA binds to the exterior of the filament while single-stranded (ss)DNA is stabiized in the filament's interior. The ATP-DnaA-oriC complex binds and stabilizes one strand of the AT-rich DNA unwinding element (DUE), permitting loading of DNA polymerase. After initiation quickly degrades to an ADP-DnaA complex that is not apt for DNA replication. Binds acidic phospholipids. The polypeptide is Chromosomal replication initiator protein DnaA (Rhodopseudomonas palustris (strain TIE-1)).